The chain runs to 90 residues: Protein PRAC2 (90 aa).

Highly expressed in prostate and testis. Also detected in placenta, muscle, colon, peripheral blood leukocytes and skin.

Its subcellular location is the nucleus. The protein is Protein PRAC2 of Homo sapiens (Human).